We begin with the raw amino-acid sequence, 312 residues long: Dihydroorotate dehydrogenase B (NAD(+)), catalytic subunit (312 aa).

Residues Ser-23 and 47 to 48 contribute to the FMN site; that span reads KA. Substrate is bound by residues Lys-47 and 71–75; that span reads NAIGL. FMN is bound by residues Asn-102 and Asn-130. Asn-130 provides a ligand contact to substrate. Catalysis depends on Cys-133, which acts as the Nucleophile. Residues Lys-168 and Ile-194 each contribute to the FMN site. 195–196 serves as a coordination point for substrate; the sequence is NT. FMN contacts are provided by residues Gly-220, 246-247, and 268-269; these read GG and GT.

Belongs to the dihydroorotate dehydrogenase family. Type 1 subfamily. As to quaternary structure, heterotetramer of 2 PyrK and 2 PyrD type B subunits. FMN is required as a cofactor.

Its subcellular location is the cytoplasm. It catalyses the reaction (S)-dihydroorotate + NAD(+) = orotate + NADH + H(+). It participates in pyrimidine metabolism; UMP biosynthesis via de novo pathway; orotate from (S)-dihydroorotate (NAD(+) route): step 1/1. Functionally, catalyzes the conversion of dihydroorotate to orotate with NAD(+) as electron acceptor. This chain is Dihydroorotate dehydrogenase B (NAD(+)), catalytic subunit (pyrDB), found in Enterococcus faecalis (strain ATCC 47077 / OG1RF).